The chain runs to 492 residues: Protein GvpD2 (492 aa).

39 to 46 is a binding site for ATP; the sequence is GAPGTGKT. Over residues 355 to 368 the composition is skewed to basic and acidic residues; it reads RDHDDAVDPDRLPG. The tract at residues 355-379 is disordered; it reads RDHDDAVDPDRLPGHDTTPTEHGTL.

The protein belongs to the gas vesicle GvpD family. Homodimer. Interacts with GvpE, also with GvpE from H.mediterranei.

The protein localises to the cytoplasm. Its function is as follows. Causes a decrease in the amount of GvpE protein. Gas vesicles are hollow, gas filled proteinaceous nanostructures found in several microbial planktonic microorganisms. They allow positioning of halobacteria at the optimal depth for growth in the poorly aerated, shallow brine pools of their habitat. Expression of 2 c-vac DNA fragments containing 2 divergently transcribed regions (gvpE-gvpF-gvpG-gvpH-gvpI-gvpJ-gvpK-gvpL-gvpM and gvpA-gvpC-gvpN-gvpO) allows H.volcanii to produce gas vesicles. The chain is Protein GvpD2 from Halobacterium salinarum (strain ATCC 700922 / JCM 11081 / NRC-1) (Halobacterium halobium).